The chain runs to 129 residues: Large ribosomal subunit protein uL22 (129 aa).

The protein belongs to the universal ribosomal protein uL22 family. Part of the 50S ribosomal subunit.

In terms of biological role, this protein binds specifically to 23S rRNA; its binding is stimulated by other ribosomal proteins, e.g. L4, L17, and L20. It is important during the early stages of 50S assembly. It makes multiple contacts with different domains of the 23S rRNA in the assembled 50S subunit and ribosome. Functionally, the globular domain of the protein is located near the polypeptide exit tunnel on the outside of the subunit, while an extended beta-hairpin is found that lines the wall of the exit tunnel in the center of the 70S ribosome. The sequence is that of Large ribosomal subunit protein uL22 from Onion yellows phytoplasma (strain OY-M).